A 712-amino-acid chain; its full sequence is WD repeat-containing protein 91 (712 aa).

Residues 148-180 (RRTNQVQEENEVLRQKLFALQAEIHRLKKEEQQ) adopt a coiled-coil conformation. Serine 221 bears the Phosphoserine mark. Positions 230-243 (LLPQSKKSPSRLSP) are enriched in low complexity. Residues 230-336 (LLPQSKKSPS…EAEPCPELHT (107 aa)) form a disordered region. Phosphoserine is present on residues serine 253 and serine 258. Residues 297–308 (RLQDHGKERKEL) show a composition bias toward basic and acidic residues. WD repeat units lie at residues 371-410 (EHHSSIMHCRVDCSGRRVASLDVDGVIKVWSFNPIMQTKA), 413-453 (ISKS…NLCE), 480-520 (AAPS…QQLQ), 525-564 (PEPIAINCTAFNHNGNLLVTGAADGVIRLFDMQQHECAMS), 567-606 (AHYGEVYSVEFSYDENTVYSIGEDGKFIQWNIHKSGLKVS), 629-667 (VQVPRGRLFAFDSEGNYMLTCSATGGVIYKLGGDEKVLE), and 674-712 (GHRAPVVTVDWSTAMDCGTCLTASMDGKIKLTTLLAHKA).

The protein belongs to the WD repeat WDR91 family. As to quaternary structure, interacts with WDR81; involved in early to late endosome cargo transport. Interacts with BECN1; negatively regulates the PI3 kinase/PI3K activity associated with endosomal membranes.

It is found in the early endosome membrane. The protein resides in the late endosome membrane. Functionally, functions as a negative regulator of the PI3 kinase/PI3K activity associated with endosomal membranes via BECN1, a core subunit of the PI3K complex. By modifying the phosphatidylinositol 3-phosphate/PtdInsP3 content of endosomal membranes may regulate endosome fusion, recycling, sorting and early to late endosome transport. It is for instance, required for the delivery of cargos like BST2/tetherin from early to late endosome and thereby participates indirectly to their degradation by the lysosome. May play a role in meiosis. The chain is WD repeat-containing protein 91 from Pongo abelii (Sumatran orangutan).